The sequence spans 279 residues: Proteasome subunit alpha type-1 (279 aa).

Tyr103 bears the Phosphotyrosine mark. Residues 235–249 (HVAIAKENDNDTPRN) show a composition bias toward basic and acidic residues. Residues 235-279 (HVAIAKENDNDTPRNDDDDDRPSPPEEPAAGPRDPEVLVATEQRP) form a disordered region.

This sequence belongs to the peptidase T1A family. As to quaternary structure, the 26S proteasome consists of a 20S proteasome core and two 19S regulatory subunits. The 20S proteasome core is composed of 28 subunits that are arranged in four stacked rings, resulting in a barrel-shaped structure. The two end rings are each formed by seven alpha subunits, and the two central rings are each formed by seven beta subunits. The catalytic chamber with the active sites is on the inside of the barrel. Interacts with PI31.

The protein resides in the cytoplasm. It is found in the nucleus. In terms of biological role, the proteasome is a multicatalytic proteinase complex which is characterized by its ability to cleave peptides with Arg, Phe, Tyr, Leu, and Glu adjacent to the leaving group at neutral or slightly basic pH. The proteasome has an ATP-dependent proteolytic activity. The protein is Proteasome subunit alpha type-1 (Prosalpha6) of Drosophila melanogaster (Fruit fly).